A 100-amino-acid polypeptide reads, in one-letter code: NADH-quinone oxidoreductase subunit K 2 (100 aa).

3 helical membrane passes run 4–24 (LWWH…GVLL), 28–48 (ILVV…NFIA), and 60–80 (IFAI…LGIL).

The protein belongs to the complex I subunit 4L family. In terms of assembly, NDH-1 is composed of 14 different subunits. Subunits NuoA, H, J, K, L, M, N constitute the membrane sector of the complex.

The protein localises to the cell inner membrane. It catalyses the reaction a quinone + NADH + 5 H(+)(in) = a quinol + NAD(+) + 4 H(+)(out). Functionally, NDH-1 shuttles electrons from NADH, via FMN and iron-sulfur (Fe-S) centers, to quinones in the respiratory chain. The immediate electron acceptor for the enzyme in this species is believed to be ubiquinone. Couples the redox reaction to proton translocation (for every two electrons transferred, four hydrogen ions are translocated across the cytoplasmic membrane), and thus conserves the redox energy in a proton gradient. This is NADH-quinone oxidoreductase subunit K 2 from Sinorhizobium fredii (strain NBRC 101917 / NGR234).